Consider the following 142-residue polypeptide: Maximins y/Hw (142 aa).

Positions 1–18 (MIFKYIVAVSFLIASGYA) are cleaved as a signal peptide. A propeptide spanning residues 19-43 (RSVKNDEQSLSQREVLEEESLREIR) is cleaved from the precursor. The residue at position 68 (phenylalanine 68) is a Phenylalanine amide. Residues 72–121 (TAEDHEVMKRLEAVIRDLDSLDHSEEASERETRGFNQEEIANLFTKKEKR) constitute a propeptide that is removed on maturation. Isoleucine 141 bears the Isoleucine amide mark.

The protein belongs to the bombinin family. Expressed by the skin glands.

The protein resides in the secreted. Its function is as follows. Maximin-y shows antimicrobial activity against bacteria and against the fungus C.albicans. It has little hemolytic activity. Functionally, maximin-Hw shows antimicrobial activity against bacteria and against the fungus C.albicans. Shows strong hemolytic activity. The chain is Maximins y/Hw from Bombina maxima (Giant fire-bellied toad).